Consider the following 245-residue polypeptide: NAD-dependent protein deacylase 1 (245 aa).

A Deacetylase sirtuin-type domain is found at 1–243 (MDEKLLKTIA…DELVRHVRKA (243 aa)). Residue 20-39 (GAGVSAESGIPTFRGKDGLW) coordinates NAD(+). Residues Tyr-64 and Arg-67 each contribute to the substrate site. 98–101 (QNVD) is an NAD(+) binding site. His-116 (proton acceptor) is an active-site residue. Residues Cys-124, Cys-127, Cys-145, and Cys-148 each contribute to the Zn(2+) site. Residues 185-187 (GTS), 211-213 (NPD), and Ala-229 each bind NAD(+).

The protein belongs to the sirtuin family. Class III subfamily. Requires Zn(2+) as cofactor.

It localises to the cytoplasm. It catalyses the reaction N(6)-acetyl-L-lysyl-[protein] + NAD(+) + H2O = 2''-O-acetyl-ADP-D-ribose + nicotinamide + L-lysyl-[protein]. The enzyme catalyses N(6)-succinyl-L-lysyl-[protein] + NAD(+) + H2O = 2''-O-succinyl-ADP-D-ribose + nicotinamide + L-lysyl-[protein]. Its function is as follows. NAD-dependent lysine deacetylase and desuccinylase that specifically removes acetyl and succinyl groups on target proteins. Modulates the activities of several proteins which are inactive in their acylated form. Deacetylates the N-terminal lysine residue of Alba, the major archaeal chromatin protein and that, in turn, increases Alba's DNA binding affinity, thereby repressing transcription. This is NAD-dependent protein deacylase 1 from Archaeoglobus fulgidus (strain ATCC 49558 / DSM 4304 / JCM 9628 / NBRC 100126 / VC-16).